Here is a 344-residue protein sequence, read N- to C-terminus: UDP-3-O-acylglucosamine N-acyltransferase (344 aa).

The active-site Proton acceptor is histidine 244.

Belongs to the transferase hexapeptide repeat family. LpxD subfamily. As to quaternary structure, homotrimer.

The enzyme catalyses a UDP-3-O-[(3R)-3-hydroxyacyl]-alpha-D-glucosamine + a (3R)-hydroxyacyl-[ACP] = a UDP-2-N,3-O-bis[(3R)-3-hydroxyacyl]-alpha-D-glucosamine + holo-[ACP] + H(+). The protein operates within bacterial outer membrane biogenesis; LPS lipid A biosynthesis. Functionally, catalyzes the N-acylation of UDP-3-O-acylglucosamine using 3-hydroxyacyl-ACP as the acyl donor. Is involved in the biosynthesis of lipid A, a phosphorylated glycolipid that anchors the lipopolysaccharide to the outer membrane of the cell. This chain is UDP-3-O-acylglucosamine N-acyltransferase, found in Pseudoalteromonas atlantica (strain T6c / ATCC BAA-1087).